The following is a 145-amino-acid chain: Immune protein Tsi4 (145 aa).

The next 2 helical transmembrane spans lie at 9–29 (IGGLLHASLFSLLGLGLLLAG) and 109–129 (ALWGTGAFLCGFGALFGIVGF).

The protein resides in the membrane. Functionally, immunity protein that plays a role in preventing early activation of toxin Tse4. This chain is Immune protein Tsi4, found in Pseudomonas aeruginosa (strain ATCC 15692 / DSM 22644 / CIP 104116 / JCM 14847 / LMG 12228 / 1C / PRS 101 / PAO1).